Consider the following 433-residue polypeptide: Adenylosuccinate synthetase (433 aa).

GTP-binding positions include 11-17 (GDEGKGK) and 39-41 (GHT). Catalysis depends on aspartate 12, which acts as the Proton acceptor. Mg(2+) contacts are provided by aspartate 12 and glycine 39. Residues 12-15 (DEGK), 37-40 (NAGH), threonine 134, arginine 148, asparagine 230, threonine 245, and arginine 309 contribute to the IMP site. Histidine 40 (proton donor) is an active-site residue. Substrate is bound at residue 305-311 (VTTGRKR). GTP is bound by residues arginine 311, 337–339 (KLD), and 419–421 (GTG).

It belongs to the adenylosuccinate synthetase family. Homodimer. Mg(2+) serves as cofactor.

Its subcellular location is the cytoplasm. The catalysed reaction is IMP + L-aspartate + GTP = N(6)-(1,2-dicarboxyethyl)-AMP + GDP + phosphate + 2 H(+). The protein operates within purine metabolism; AMP biosynthesis via de novo pathway; AMP from IMP: step 1/2. Functionally, plays an important role in the de novo pathway and in the salvage pathway of purine nucleotide biosynthesis. Catalyzes the first committed step in the biosynthesis of AMP from IMP. The sequence is that of Adenylosuccinate synthetase from Saccharomyces cerevisiae (strain JAY291) (Baker's yeast).